The primary structure comprises 633 residues: Guanylate-binding protein 6 (633 aa).

A GTPase domain (Globular) region spans residues 1–310 (MESGPKMLAP…EAINSGAVPC (310 aa)). The region spanning 35 to 277 (SQPVVVVAIV…FCSYIFTHAR (243 aa)) is the GB1/RHD3-type G domain. GTP-binding positions include 45 to 52 (GLYRTGKS), 67 to 69 (LGS), and 97 to 101 (DTEGL).

The protein belongs to the TRAFAC class dynamin-like GTPase superfamily. GB1/RHD3 GTPase family. GB1 subfamily. (Microbial infection) Ubiquitinated by S.flexneri IpaH9.8, leading to its degradation by the proteasome, thereby preventing its ability to promote host defense against bacterial infection.

The protein localises to the cytoplasmic vesicle. The enzyme catalyses GTP + H2O = GDP + phosphate + H(+). In terms of biological role, interferon (IFN)-inducible GTPase that plays important roles in innate immunity against a diverse range of bacterial, viral and protozoan pathogens, such as bacterial pathogens Listeria monocytogenes and Mycobacterium bovis BCG as well as the protozoan pathogen Toxoplasma gondii. Confers protection to several pathogens, including the bacterial pathogens Listeria monocytogenes and Mycobacterium bovis BCG as well as the protozoan pathogen Toxoplasma gondii. The polypeptide is Guanylate-binding protein 6 (GBP6) (Homo sapiens (Human)).